Consider the following 340-residue polypeptide: 4-amino-5-hydroxymethyl-2-methylpyrimidine phosphate synthase THI11 (340 aa).

Lys-62 is modified (N6-(pyridoxal phosphate)lysine). His-66 is a catalytic residue. 115–118 (GEFG) contributes to the pyridoxal 5'-phosphate binding site. The short motif at 195-199 (CCCFC) is the CCCFC; essential for catalytic activity, may be the site of iron coordination element.

It belongs to the NMT1/THI5 family. In terms of assembly, homodimer. Requires Fe cation as cofactor.

The enzyme catalyses N(6)-(pyridoxal phosphate)-L-lysyl-[4-amino-5-hydroxymethyl-2-methylpyrimidine phosphate synthase] + L-histidyl-[4-amino-5-hydroxymethyl-2-methylpyrimidine phosphate synthase] + 2 Fe(3+) + 4 H2O = L-lysyl-[4-amino-5-hydroxymethyl-2-methylpyrimidine phosphate synthase] + (2S)-2-amino-5-hydroxy-4-oxopentanoyl-[4-amino-5-hydroxymethyl-2-methylpyrimidine phosphate synthase] + 4-amino-2-methyl-5-(phosphooxymethyl)pyrimidine + 3-oxopropanoate + 2 Fe(2+) + 2 H(+). The protein operates within cofactor biosynthesis; thiamine diphosphate biosynthesis. Its function is as follows. Responsible for the formation of the pyrimidine heterocycle in the thiamine biosynthesis pathway. Catalyzes the formation of hydroxymethylpyrimidine phosphate (HMP-P) from histidine and pyridoxal phosphate (PLP). The protein uses PLP and the active site histidine to form HMP-P, generating an inactive enzyme. The enzyme can only undergo a single turnover, which suggests it is a suicide enzyme. This chain is 4-amino-5-hydroxymethyl-2-methylpyrimidine phosphate synthase THI11, found in Saccharomyces cerevisiae (strain ATCC 204508 / S288c) (Baker's yeast).